The primary structure comprises 398 residues: Cathepsin D (398 aa).

A signal peptide spans 1–20 (MAPRGLLVLLLLALVGPCAA). The propeptide at 21–63 (LIRIPLTKFTSTRRMLTEVGSEIPDMNAITQFLKFKLGFADLA) is activation peptide. A Peptidase A1 domain is found at 78 to 395 (YYGEIGIGTP…DRDNDSVGFA (318 aa)). Residue D96 is part of the active site. An intrachain disulfide couples C109 to C116. N-linked (GlcNAc...) asparagine glycans are attached at residues N133 and N251. C274 and C278 are disulfide-bonded. The active site involves D283. The cysteines at positions 317 and 354 are disulfide-linked.

This sequence belongs to the peptidase A1 family. Consists of a light chain and a heavy chain. Oocytic yolk, preovulatory follicles, liver.

It is found in the lysosome. The enzyme catalyses Specificity similar to, but narrower than, that of pepsin A. Does not cleave the 4-Gln-|-His-5 bond in B chain of insulin.. Functionally, acid protease active in intracellular protein breakdown. In chicken it is a key enzyme for yolk formation as it is capable of catalyzing intra oocytic break down of protein components of both vitellogenin and VLDL. This Gallus gallus (Chicken) protein is Cathepsin D (CTSD).